The chain runs to 268 residues: Cytolethal distending toxin subunit A (268 aa).

The N-terminal stretch at 1 to 19 (MQKIIVFILCCFMTFFLYA) is a signal peptide. The N-palmitoyl cysteine moiety is linked to residue Cys20. Cys20 carries S-diacylglycerol cysteine lipidation. A Ricin B-type lectin domain is found at 112 to 252 (VSDFLTILGP…DNFDQQWFLT (141 aa)). The interval 129-140 (WALAQGNWIWGY) is mediates binding to target cells.

Heterotrimer of 3 subunits, CdtA, CdtB and CdtC.

It is found in the cell outer membrane. Its function is as follows. CDTs are cytotoxins which induce cell distension, growth arrest in G2/M phase, nucleus swelling, and chromatin fragmentation in HeLa cells. This is Cytolethal distending toxin subunit A (cdtA) from Campylobacter jejuni subsp. jejuni serotype O:2 (strain ATCC 700819 / NCTC 11168).